The sequence spans 186 residues: Peptidyl-tRNA hydrolase (186 aa).

Tyr-14 contributes to the tRNA binding site. His-19 functions as the Proton acceptor in the catalytic mechanism. The tRNA site is built by Tyr-61, Asn-63, and Asn-107.

The protein belongs to the PTH family. In terms of assembly, monomer.

Its subcellular location is the cytoplasm. The enzyme catalyses an N-acyl-L-alpha-aminoacyl-tRNA + H2O = an N-acyl-L-amino acid + a tRNA + H(+). Hydrolyzes ribosome-free peptidyl-tRNAs (with 1 or more amino acids incorporated), which drop off the ribosome during protein synthesis, or as a result of ribosome stalling. Its function is as follows. Catalyzes the release of premature peptidyl moieties from peptidyl-tRNA molecules trapped in stalled 50S ribosomal subunits, and thus maintains levels of free tRNAs and 50S ribosomes. This is Peptidyl-tRNA hydrolase from Helicobacter pylori (strain HPAG1).